A 176-amino-acid chain; its full sequence is MKFLFDLFPIILFFAAFKVWGIFTATAVAIVATLAQVAWVAFRHRKVDTMLWVSLGVIVVFGGATLVLHDEKFIQWKPTVLYWLFAIGLLAARYAFGNNLIEKMMGKQLTLPHPVWDKLNVAWALFFAVLGVANLYVVHNYTESQWVNFKLFGTTGAMVVFIILQSLWLTKYLKDE.

The next 6 membrane-spanning stretches (helical) occupy residues 3-23, 24-44, 49-69, 81-101, 119-139, and 149-169; these read FLFD…WGIF, TATA…AFRH, TMLW…LVLH, LYWL…NNLI, LNVA…YVVH, and FKLF…SLWL.

This sequence belongs to the YciB family.

It is found in the cell inner membrane. In terms of biological role, plays a role in cell envelope biogenesis, maintenance of cell envelope integrity and membrane homeostasis. The protein is Inner membrane-spanning protein YciB of Burkholderia ambifaria (strain MC40-6).